The primary structure comprises 65 residues: Large ribosomal subunit protein bL35 (65 aa).

Belongs to the bacterial ribosomal protein bL35 family.

The protein is Large ribosomal subunit protein bL35 of Borrelia duttonii (strain Ly).